The following is a 676-amino-acid chain: DNA ligase (676 aa).

NAD(+) is bound by residues 32–36, 81–82, and glutamate 113; these read DAEYD and SL. The N6-AMP-lysine intermediate role is filled by lysine 115. Arginine 136, glutamate 173, lysine 291, and lysine 315 together coordinate NAD(+). Zn(2+) is bound by residues cysteine 409, cysteine 412, cysteine 427, and cysteine 433. Residues 595 to 676 enclose the BRCT domain; that stretch reads SEKTYFFNKK…LNSLIRIKEQ (82 aa).

It belongs to the NAD-dependent DNA ligase family. LigA subfamily. It depends on Mg(2+) as a cofactor. The cofactor is Mn(2+).

The catalysed reaction is NAD(+) + (deoxyribonucleotide)n-3'-hydroxyl + 5'-phospho-(deoxyribonucleotide)m = (deoxyribonucleotide)n+m + AMP + beta-nicotinamide D-nucleotide.. Its function is as follows. DNA ligase that catalyzes the formation of phosphodiester linkages between 5'-phosphoryl and 3'-hydroxyl groups in double-stranded DNA using NAD as a coenzyme and as the energy source for the reaction. It is essential for DNA replication and repair of damaged DNA. The sequence is that of DNA ligase from Buchnera aphidicola subsp. Acyrthosiphon pisum (strain Tuc7).